Here is a 247-residue protein sequence, read N- to C-terminus: MRLKCTISYDGHLFNGYQVQPGKRTVQDELEKALAVLHKSKDRIPVVSSGRTDSGVHAAGQVIHFDTPLSIPAERWPYALNALLPDDIAVKQAEIADDGFHARFSAVKKEYRYFVYTEKHPDVFKRHYAYHFSYRLNVQDMREAAKHLIGTHDFTSFCAAKTEVQDKVRTIYELDWTETADGLQMRITGSGFLYNMVRIIAGTLLDAGIGKISPDEVKSMLEAKDREAAGRTAPGHGLYLWNVYYDN.

Asp53 functions as the Nucleophile in the catalytic mechanism. Tyr111 provides a ligand contact to substrate.

It belongs to the tRNA pseudouridine synthase TruA family. Homodimer.

The enzyme catalyses uridine(38/39/40) in tRNA = pseudouridine(38/39/40) in tRNA. In terms of biological role, formation of pseudouridine at positions 38, 39 and 40 in the anticodon stem and loop of transfer RNAs. This is tRNA pseudouridine synthase A from Bacillus subtilis (strain 168).